Reading from the N-terminus, the 130-residue chain is Aspartate 1-decarboxylase (130 aa).

Ser25 (schiff-base intermediate with substrate; via pyruvic acid) is an active-site residue. Pyruvic acid (Ser) is present on Ser25. Residue Thr57 coordinates substrate. Residue Tyr58 is the Proton donor of the active site. 73 to 75 contributes to the substrate binding site; sequence GAT.

The protein belongs to the PanD family. Heterooctamer of four alpha and four beta subunits. Pyruvate is required as a cofactor. In terms of processing, is synthesized initially as an inactive proenzyme, which is activated by self-cleavage at a specific serine bond to produce a beta-subunit with a hydroxyl group at its C-terminus and an alpha-subunit with a pyruvoyl group at its N-terminus.

Its subcellular location is the cytoplasm. The catalysed reaction is L-aspartate + H(+) = beta-alanine + CO2. The protein operates within cofactor biosynthesis; (R)-pantothenate biosynthesis; beta-alanine from L-aspartate: step 1/1. In terms of biological role, catalyzes the pyruvoyl-dependent decarboxylation of aspartate to produce beta-alanine. The sequence is that of Aspartate 1-decarboxylase from Lactiplantibacillus plantarum (strain ATCC BAA-793 / NCIMB 8826 / WCFS1) (Lactobacillus plantarum).